The sequence spans 148 residues: Large ribosomal subunit protein bL9 (148 aa).

Belongs to the bacterial ribosomal protein bL9 family.

Functionally, binds to the 23S rRNA. The sequence is that of Large ribosomal subunit protein bL9 from Bacillus cereus (strain G9842).